Reading from the N-terminus, the 271-residue chain is Orotidine 5'-phosphate decarboxylase (271 aa).

The active-site Proton donor is the Lys97.

The protein belongs to the OMP decarboxylase family. Type 2 subfamily.

It catalyses the reaction orotidine 5'-phosphate + H(+) = UMP + CO2. It functions in the pathway pyrimidine metabolism; UMP biosynthesis via de novo pathway; UMP from orotate: step 2/2. The sequence is that of Orotidine 5'-phosphate decarboxylase from Leptospira borgpetersenii serovar Hardjo-bovis (strain JB197).